The sequence spans 79 residues: Large ribosomal subunit protein uL24 (79 aa).

The protein belongs to the universal ribosomal protein uL24 family. In terms of assembly, part of the 50S ribosomal subunit.

Its function is as follows. One of two assembly initiator proteins, it binds directly to the 5'-end of the 23S rRNA, where it nucleates assembly of the 50S subunit. One of the proteins that surrounds the polypeptide exit tunnel on the outside of the subunit. This Lactobacillus gasseri (strain ATCC 33323 / DSM 20243 / BCRC 14619 / CIP 102991 / JCM 1131 / KCTC 3163 / NCIMB 11718 / NCTC 13722 / AM63) protein is Large ribosomal subunit protein uL24.